Reading from the N-terminus, the 302-residue chain is Methionyl-tRNA formyltransferase (302 aa).

(6S)-5,6,7,8-tetrahydrofolate is bound at residue 108 to 111 (SLLP). The span at 276–288 (REGKRPMEPEEFL) shows a compositional bias: basic and acidic residues. The disordered stretch occupies residues 276–302 (REGKRPMEPEEFLRGFPLPEGSRAHTA).

It belongs to the Fmt family.

It catalyses the reaction L-methionyl-tRNA(fMet) + (6R)-10-formyltetrahydrofolate = N-formyl-L-methionyl-tRNA(fMet) + (6S)-5,6,7,8-tetrahydrofolate + H(+). Its function is as follows. Attaches a formyl group to the free amino group of methionyl-tRNA(fMet). The formyl group appears to play a dual role in the initiator identity of N-formylmethionyl-tRNA by promoting its recognition by IF2 and preventing the misappropriation of this tRNA by the elongation apparatus. This chain is Methionyl-tRNA formyltransferase, found in Cereibacter sphaeroides (strain KD131 / KCTC 12085) (Rhodobacter sphaeroides).